Consider the following 469-residue polypeptide: RNA-editing ligase 1, mitochondrial (469 aa).

The transit peptide at 1–44 directs the protein to the mitochondrion; that stretch reads MQLQRLGAPLLKRLVGGCIRQSTAPIMPCVVVSGSGGFLTPVRT. Residues 59-61, 86-92, asparagine 92, arginine 111, glutamate 159, phenylalanine 209, and 307-309 contribute to the ATP site; these read IEI, EKVHGTN, and KLR. Catalysis depends on lysine 87, which acts as the N6-AMP-lysine intermediate. Positions 450–469 are disordered; the sequence is AAAQSEAIPPLSPAAPTKGE.

The protein belongs to the RNA ligase 2 family. In terms of assembly, component of the RNA editing complex (editosome), a 1600 kDa complex composed of at least 20 proteins. Interacts with terminal uridylyltransferase MEAT1.

The protein localises to the mitochondrion. It carries out the reaction ATP + (ribonucleotide)n-3'-hydroxyl + 5'-phospho-(ribonucleotide)m = (ribonucleotide)n+m + AMP + diphosphate.. Essential for RNA editing. RNA editing in kinetoplastid mitochondria inserts and deletes uridylates at multiple sites in pre-mRNAs as directed by guide RNAs. This chain is RNA-editing ligase 1, mitochondrial (REL1), found in Trypanosoma brucei brucei (strain 927/4 GUTat10.1).